Reading from the N-terminus, the 250-residue chain is 26S proteasome non-ATPase regulatory subunit 8 (250 aa).

The region spanning 63–233 (HDFETFDDYI…QEKPVNLDTV (171 aa)) is the PCI domain.

Belongs to the proteasome subunit S14 family.

Its function is as follows. Acts as a regulatory subunit of the 26S proteasome which is involved in the ATP-dependent degradation of ubiquitinated proteins. The polypeptide is 26S proteasome non-ATPase regulatory subunit 8 (Caenorhabditis elegans).